Here is a 463-residue protein sequence, read N- to C-terminus: Retinoic acid receptor RXR-gamma (463 aa).

A modulating region spans residues 1 to 138 (MYGNYSHFMK…TSPGSLVKHI (138 aa)). Residues 17-53 (GSPGHSGSTSMSPSAALSTGKPMDSHPSYTDTPVSAP) are disordered. Residues 21–33 (HSGSTSMSPSAAL) are compositionally biased toward polar residues. 2 NR C4-type zinc fingers span residues 139–159 (CAIC…CEGC) and 175–199 (CRDN…YQKC). Residues 139 to 204 (CAICGDRSSG…RYQKCLVMGM (66 aa)) constitute a DNA-binding region (nuclear receptor). The hinge stretch occupies residues 205 to 230 (KREAVQEERQRSRERAESEAECASSG). The span at 211 to 222 (EERQRSRERAES) shows a compositional bias: basic and acidic residues. The interval 211 to 232 (EERQRSRERAESEAECASSGHE) is disordered. The region spanning 231–459 (HEDMPVERIL…TFLMEMLETP (229 aa)) is the NR LBD domain.

The protein belongs to the nuclear hormone receptor family. NR2 subfamily. As to quaternary structure, homodimer. Heterodimer with a RAR molecule. Binds DNA preferentially as a RAR/RXR heterodimer. Interacts with RARA. Acetylated by EP300.

It is found in the nucleus. The protein localises to the cytoplasm. Its function is as follows. Receptor for retinoic acid. Retinoic acid receptors bind as heterodimers to their target response elements in response to their ligands, all-trans or 9-cis retinoic acid, and regulate gene expression in various biological processes. The RAR/RXR heterodimers bind to the retinoic acid response elements (RARE) composed of tandem 5'-AGGTCA-3' sites known as DR1-DR5. The high affinity ligand for RXRs is 9-cis retinoic acid. In Sus scrofa (Pig), this protein is Retinoic acid receptor RXR-gamma (RXRG).